Reading from the N-terminus, the 78-residue chain is DNA gyrase inhibitor YacG (78 aa).

Residues Cys7, Cys10, Cys26, and Cys30 each contribute to the Zn(2+) site.

Belongs to the DNA gyrase inhibitor YacG family. In terms of assembly, interacts with GyrB. Zn(2+) serves as cofactor.

Its function is as follows. Inhibits all the catalytic activities of DNA gyrase by preventing its interaction with DNA. Acts by binding directly to the C-terminal domain of GyrB, which probably disrupts DNA binding by the gyrase. In Shewanella piezotolerans (strain WP3 / JCM 13877), this protein is DNA gyrase inhibitor YacG.